The chain runs to 248 residues: Triosephosphate isomerase (248 aa).

Residue 9-11 (NWK) coordinates substrate. The Electrophile role is filled by His-94. The active-site Proton acceptor is Glu-166. Substrate contacts are provided by residues Gly-172, Ser-212, and 233–234 (GG).

Belongs to the triosephosphate isomerase family. In terms of assembly, homodimer.

The protein resides in the cytoplasm. The catalysed reaction is D-glyceraldehyde 3-phosphate = dihydroxyacetone phosphate. The protein operates within carbohydrate biosynthesis; gluconeogenesis. It participates in carbohydrate degradation; glycolysis; D-glyceraldehyde 3-phosphate from glycerone phosphate: step 1/1. In terms of biological role, involved in the gluconeogenesis. Catalyzes stereospecifically the conversion of dihydroxyacetone phosphate (DHAP) to D-glyceraldehyde-3-phosphate (G3P). The sequence is that of Triosephosphate isomerase from Clostridium beijerinckii (strain ATCC 51743 / NCIMB 8052) (Clostridium acetobutylicum).